We begin with the raw amino-acid sequence, 282 residues long: uncharacterized protein (282 aa).

To M.tuberculosis Rv2161c and Rv3079c.

This is an uncharacterized protein from Mycobacterium tuberculosis (strain CDC 1551 / Oshkosh).